The primary structure comprises 119 residues: Large ribosomal subunit protein bL12 (119 aa).

It belongs to the bacterial ribosomal protein bL12 family. Homodimer. Part of the ribosomal stalk of the 50S ribosomal subunit. Forms a multimeric L10(L12)X complex, where L10 forms an elongated spine to which 2 to 4 L12 dimers bind in a sequential fashion. Binds GTP-bound translation factors.

Forms part of the ribosomal stalk which helps the ribosome interact with GTP-bound translation factors. Is thus essential for accurate translation. The protein is Large ribosomal subunit protein bL12 of Bacillus anthracis (strain A0248).